The primary structure comprises 305 residues: NADH-cytochrome b5 reductase 1 (305 aa).

A helical membrane pass occupies residues 8–28 (VLLASLGVGLFTLFGLALGTY). One can recognise an FAD-binding FR-type domain in the interval 44-156 (DEKYLLRLLD…RGPSGLLSYA (113 aa)). Residues 136–166 (DSLKIGDVVEFRGPSGLLSYAGKGNFNIQPN) and 175–210 (VAKKLGMIAGGTGITPMLQLIRAILKVPEDPTQCFL) each bind FAD.

Belongs to the flavoprotein pyridine nucleotide cytochrome reductase family. Requires FAD as cofactor.

The protein localises to the membrane. It catalyses the reaction 2 Fe(III)-[cytochrome b5] + NADH = 2 Fe(II)-[cytochrome b5] + NAD(+) + H(+). NADH-cytochrome b5 reductases are involved in desaturation and elongation of fatty acids, cholesterol biosynthesis, drug metabolism, and, in erythrocyte, methemoglobin reduction. This chain is NADH-cytochrome b5 reductase 1 (Cyb5r1), found in Rattus norvegicus (Rat).